A 430-amino-acid polypeptide reads, in one-letter code: Asparagine--tRNA ligase (430 aa).

The protein belongs to the class-II aminoacyl-tRNA synthetase family. As to quaternary structure, homodimer.

The protein resides in the cytoplasm. The catalysed reaction is tRNA(Asn) + L-asparagine + ATP = L-asparaginyl-tRNA(Asn) + AMP + diphosphate + H(+). In Bacillus licheniformis (strain ATCC 14580 / DSM 13 / JCM 2505 / CCUG 7422 / NBRC 12200 / NCIMB 9375 / NCTC 10341 / NRRL NRS-1264 / Gibson 46), this protein is Asparagine--tRNA ligase.